Consider the following 180-residue polypeptide: O-acetyl-ADP-ribose deacetylase (180 aa).

A Macro domain is found at 1 to 175 (MSGRINVVQG…LYQRLLGQYD (175 aa)). Substrate-binding positions include 11–12 (DI), Asn25, 33–35 (GVD), and 122–126 (STGIY). Asp35 acts as the Proton acceptor in catalysis.

The protein belongs to the MacroD-type family. YmdB subfamily. In terms of assembly, homodimer. Interacts with RNase III.

It carries out the reaction 3''-O-acetyl-ADP-D-ribose + H2O = ADP-D-ribose + acetate + H(+). The catalysed reaction is 2''-O-acetyl-ADP-D-ribose + H2O = ADP-D-ribose + acetate + H(+). Functionally, deacetylates O-acetyl-ADP ribose to yield ADP-ribose and free acetate. Down-regulates ribonuclease 3 (RNase III) activity. Acts by interacting directly with the region of the ribonuclease that is required for dimerization/activation. This chain is O-acetyl-ADP-ribose deacetylase, found in Cronobacter sakazakii (strain ATCC BAA-894) (Enterobacter sakazakii).